The primary structure comprises 570 residues: Urease subunit alpha (570 aa).

A Urease domain is found at 131–570; that stretch reads GGMDSHIHFI…LPMAQRYFLF (440 aa). Residues histidine 136, histidine 138, and lysine 219 each contribute to the Ni(2+) site. Lysine 219 is subject to N6-carboxylysine. Histidine 221 contributes to the substrate binding site. The Ni(2+) site is built by histidine 248 and histidine 274. Histidine 322 serves as the catalytic Proton donor. Aspartate 362 contacts Ni(2+).

It belongs to the metallo-dependent hydrolases superfamily. Urease alpha subunit family. As to quaternary structure, heterotrimer of UreA (gamma), UreB (beta) and UreC (alpha) subunits. Three heterotrimers associate to form the active enzyme. Requires Ni cation as cofactor. In terms of processing, carboxylation allows a single lysine to coordinate two nickel ions.

The protein localises to the cytoplasm. It carries out the reaction urea + 2 H2O + H(+) = hydrogencarbonate + 2 NH4(+). The protein operates within nitrogen metabolism; urea degradation; CO(2) and NH(3) from urea (urease route): step 1/1. This is Urease subunit alpha from Allorhizobium ampelinum (strain ATCC BAA-846 / DSM 112012 / S4) (Agrobacterium vitis (strain S4)).